A 236-amino-acid chain; its full sequence is 4-hydroxy-tetrahydrodipicolinate reductase (236 aa).

NAD(+)-binding positions include 11 to 16, 92 to 94, and 116 to 119; these read GASGRM, GTT, and GSNF. The active-site Proton donor/acceptor is the H148. H149 is a binding site for (S)-2,3,4,5-tetrahydrodipicolinate. The active-site Proton donor is K152. Position 158–159 (158–159) interacts with (S)-2,3,4,5-tetrahydrodipicolinate; that stretch reads GS.

This sequence belongs to the DapB family.

It is found in the cytoplasm. The enzyme catalyses (S)-2,3,4,5-tetrahydrodipicolinate + NAD(+) + H2O = (2S,4S)-4-hydroxy-2,3,4,5-tetrahydrodipicolinate + NADH + H(+). It carries out the reaction (S)-2,3,4,5-tetrahydrodipicolinate + NADP(+) + H2O = (2S,4S)-4-hydroxy-2,3,4,5-tetrahydrodipicolinate + NADPH + H(+). Its pathway is amino-acid biosynthesis; L-lysine biosynthesis via DAP pathway; (S)-tetrahydrodipicolinate from L-aspartate: step 4/4. Catalyzes the conversion of 4-hydroxy-tetrahydrodipicolinate (HTPA) to tetrahydrodipicolinate. This is 4-hydroxy-tetrahydrodipicolinate reductase from Xylella fastidiosa (strain M23).